The following is a 249-amino-acid chain: 3-deoxy-D-manno-octulosonic acid kinase (249 aa).

The active site involves D175.

Belongs to the protein kinase superfamily. KdkA/RfaP family.

The protein resides in the cell inner membrane. The catalysed reaction is an alpha-Kdo-(2-&gt;6)-lipid IVA + ATP = a 4-O-phospho-alpha-Kdo-(2-&gt;6)-lipid IVA + ADP + H(+). The protein operates within bacterial outer membrane biogenesis; LPS core biosynthesis. Catalyzes the ATP-dependent phosphorylation of the 3-deoxy-D-manno-octulosonic acid (Kdo) residue in Kdo-lipid IV(A) at the 4-OH position. In Stenotrophomonas maltophilia (strain R551-3), this protein is 3-deoxy-D-manno-octulosonic acid kinase.